We begin with the raw amino-acid sequence, 291 residues long: UPF0276 protein VV3194 (291 aa).

It belongs to the UPF0276 family.

The sequence is that of UPF0276 protein VV3194 from Vibrio vulnificus (strain YJ016).